Here is a 446-residue protein sequence, read N- to C-terminus: Ribosomal protein uS12 methylthiotransferase RimO (446 aa).

The region spanning 10-122 (KTLHMVSLGC…IDELVNEKRS (113 aa)) is the MTTase N-terminal domain. The [4Fe-4S] cluster site is built by cysteine 19, cysteine 53, cysteine 85, cysteine 154, cysteine 158, and cysteine 161. Residues 140–369 (TGSSYHAYVK…GEIISQTTQE (230 aa)) form the Radical SAM core domain. The TRAM domain maps to 372–446 (ESEVGKTFEV…GDKLLATVIK (75 aa)).

Belongs to the methylthiotransferase family. RimO subfamily. The cofactor is [4Fe-4S] cluster.

The protein localises to the cytoplasm. The enzyme catalyses L-aspartate(89)-[ribosomal protein uS12]-hydrogen + (sulfur carrier)-SH + AH2 + 2 S-adenosyl-L-methionine = 3-methylsulfanyl-L-aspartate(89)-[ribosomal protein uS12]-hydrogen + (sulfur carrier)-H + 5'-deoxyadenosine + L-methionine + A + S-adenosyl-L-homocysteine + 2 H(+). Catalyzes the methylthiolation of an aspartic acid residue of ribosomal protein uS12. This chain is Ribosomal protein uS12 methylthiotransferase RimO, found in Aliarcobacter butzleri (strain RM4018) (Arcobacter butzleri).